Reading from the N-terminus, the 202-residue chain is ATP-dependent Clp protease proteolytic subunit (202 aa).

The active-site Nucleophile is Ser106. His131 is a catalytic residue.

It belongs to the peptidase S14 family. As to quaternary structure, fourteen ClpP subunits assemble into 2 heptameric rings which stack back to back to give a disk-like structure with a central cavity, resembling the structure of eukaryotic proteasomes.

It is found in the cytoplasm. The catalysed reaction is Hydrolysis of proteins to small peptides in the presence of ATP and magnesium. alpha-casein is the usual test substrate. In the absence of ATP, only oligopeptides shorter than five residues are hydrolyzed (such as succinyl-Leu-Tyr-|-NHMec, and Leu-Tyr-Leu-|-Tyr-Trp, in which cleavage of the -Tyr-|-Leu- and -Tyr-|-Trp bonds also occurs).. In terms of biological role, cleaves peptides in various proteins in a process that requires ATP hydrolysis. Has a chymotrypsin-like activity. Plays a major role in the degradation of misfolded proteins. This Acidovorax sp. (strain JS42) protein is ATP-dependent Clp protease proteolytic subunit.